Consider the following 61-residue polypeptide: MSKTVVRKNESLDDALRRFKRSVSKTGTLQEYRKREFYEKPSVKRKKKSEAARKRKNKRRF.

The segment at 40–61 is disordered; it reads KPSVKRKKKSEAARKRKNKRRF. Over residues 43–61 the composition is skewed to basic residues; it reads VKRKKKSEAARKRKNKRRF.

This sequence belongs to the bacterial ribosomal protein bS21 family.

The chain is Small ribosomal subunit protein bS21 from Ligilactobacillus salivarius (strain UCC118) (Lactobacillus salivarius).